A 357-amino-acid polypeptide reads, in one-letter code: Glycerol-3-phosphate dehydrogenase [NAD(P)+] (357 aa).

NADPH-binding residues include Ser30, Phe31, Arg51, and Lys124. Sn-glycerol 3-phosphate-binding residues include Lys124 and Gly152. Ala156 contacts NADPH. The sn-glycerol 3-phosphate site is built by Lys207, Asp260, Ser270, Arg271, and Asn272. Lys207 serves as the catalytic Proton acceptor. Arg271 is an NADPH binding site. Glu297 lines the NADPH pocket.

The protein belongs to the NAD-dependent glycerol-3-phosphate dehydrogenase family.

It localises to the cytoplasm. It carries out the reaction sn-glycerol 3-phosphate + NAD(+) = dihydroxyacetone phosphate + NADH + H(+). It catalyses the reaction sn-glycerol 3-phosphate + NADP(+) = dihydroxyacetone phosphate + NADPH + H(+). It functions in the pathway membrane lipid metabolism; glycerophospholipid metabolism. In terms of biological role, catalyzes the reduction of the glycolytic intermediate dihydroxyacetone phosphate (DHAP) to sn-glycerol 3-phosphate (G3P), the key precursor for phospholipid synthesis. In Acinetobacter baylyi (strain ATCC 33305 / BD413 / ADP1), this protein is Glycerol-3-phosphate dehydrogenase [NAD(P)+].